The following is a 512-amino-acid chain: Maturase K (512 aa).

Belongs to the intron maturase 2 family. MatK subfamily.

It localises to the plastid. Its subcellular location is the chloroplast. In terms of biological role, usually encoded in the trnK tRNA gene intron. Probably assists in splicing its own and other chloroplast group II introns. The sequence is that of Maturase K from Lemna minor (Common duckweed).